Reading from the N-terminus, the 129-residue chain is 3-aminoacrylate deaminase RutC (129 aa).

Belongs to the RutC family.

The catalysed reaction is (Z)-3-aminoacrylate + H2O + H(+) = 3-oxopropanoate + NH4(+). Its function is as follows. Involved in pyrimidine catabolism. Catalyzes the deamination of 3-aminoacrylate to malonic semialdehyde, a reaction that can also occur spontaneously. RutC may facilitate the reaction and modulate the metabolic fitness, rather than catalyzing essential functions. The polypeptide is 3-aminoacrylate deaminase RutC (Caulobacter segnis (strain ATCC 21756 / DSM 7131 / JCM 7823 / NBRC 15250 / LMG 17158 / TK0059) (Mycoplana segnis)).